Reading from the N-terminus, the 198-residue chain is Translation machinery-associated protein 22 (198 aa).

Residues 99 to 170 enclose the SUI1 domain; the sequence is VIIKREARTK…EVETYIHSLL (72 aa).

It belongs to the DENR family. As to quaternary structure, interacts with the 40S ribosomal subunit.

It localises to the cytoplasm. The protein is Translation machinery-associated protein 22 (TMA22) of Saccharomyces cerevisiae (strain YJM789) (Baker's yeast).